The following is a 1012-amino-acid chain: DTSEFDPLANKEYTEEQKQTLEQEQKEFLSQTTTPALEADDGFIVTSASSAQSTPSMSALSGNISPDSQTSDPITKAVRETIIQPQKDNLIEQILKDLAALTDRDLAEQKRKEIEEEKEKDKTLSTFFGNPANREFIDKALENPELKKKLESIEIAGYKNVHNTFSAASGYPGGFKPVQWENHVSASDLRATVVKNDAGDELCTLNETTVKTKPFTLAKQDGTQVQISSYREIDFPIKLDKADGSMHLSMVALKADGTKPSKDKAVYFTAHYEEGPNGKPQLKEISSPKPLKFAGTGDDAIAYIEHGGEIYTLAVTRGKYKEMMKEVELNQGQSVDLSQAEDIIIGQGQSKEQPLITPQQTTSSSVEPPQYKQQVPPITPTNQPLQAETSQMPQSQQVNPNLLNTATALSGSMQDLLNYVNAGLTKEIDSNKQIDLIKEAAKAILNNEKSDIAEKQANIIALAENTVNNKNLKPDAKVAGVNAVLETIKNDQNTPDLEKSKMLEATVAIVLNSENLEPKQKQQMLEKAVDVGLSLKDDASRAAAIDGIKDVVIKSNLSPEDKGTMLIAVGDKVNVSELSNAEKQKLLGSVLKKKGVEAQVLSPAQQQLMQQHLYKITAEQTKKDTIKKVNDILFDPLSNTELKTTNIQAITSNVLDGPATAEVKGEIIQEITNTVAGSSLEAQDKAAIIKGVGETIATHSDTSLSLPNKALIMASAEKGIAESQTNLPDRELMTKGLVDGIYEGKGGPEITKAVSSGIDNSNINDSEKEALKKAKDAASEAALDRDTQNLTEGFKGQNIEEHKPHDDIYNKAREVINAVNPVIEALEKFKEPVVSAEERIVQETSSILNNISKLAVEKVNNFRAMLSPTGNLKTLEEKKEESIKKVDELVKAFGTKSSTEEQQSFIKTNLIDDKTLSKEVRLQTIDKLLQEQKRAEAIENPSVKTEDVRVVSGKSKLKPISKDNPDIEKAKMVVGRDRVNIKGNIKIMGALMNARDIIQSENLNKSTPIKRE.

Disordered regions lie at residues 1–73 and 348–396; these read DTSE…TSDP and GQSK…PQSQ. Residues 12–27 are compositionally biased toward basic and acidic residues; the sequence is EYTEEQKQTLEQEQKE. The span at 47–61 shows a compositional bias: low complexity; sequence SASSAQSTPSMSALS. Composition is skewed to polar residues over residues 62–73, 348–373, and 380–396; these read GNISPDSQTSDP, GQSK…QYKQ, and PTNQ…PQSQ.

The protein localises to the cytoplasm. The protein is Antigenic heat-stable 120 kDa protein (sca4) of Rickettsia slovaca.